Consider the following 813-residue polypeptide: G-type lectin S-receptor-like serine/threonine-protein kinase LECRK1 (813 aa).

The N-terminal stretch at 1–19 (MVALLLFPMLLQLLSPTCA) is a signal peptide. At 20–466 (QTQKNITLGS…NRKHWVLGSS (447 aa)) the chain is on the extracellular side. Residues 22-149 (QKNITLGSTL…DGTTKWQTFD (128 aa)) form the Bulb-type lectin domain. Asparagine 24, asparagine 57, asparagine 164, asparagine 168, asparagine 219, and asparagine 242 each carry an N-linked (GlcNAc...) asparagine glycan. Positions 293–346 (PQNICHAIVSDVGSGVCGFNSYCTFDGTRNQIASCQCPPWYKFFDEQKKYKGCK) constitute an EGF-like; atypical domain. 5 disulfides stabilise this stretch: cysteine 297-cysteine 315, cysteine 309-cysteine 327, cysteine 329-cysteine 345, cysteine 391-cysteine 413, and cysteine 395-cysteine 401. The 80-residue stretch at 354 to 433 (CDLEEATALA…NMADYVQRTV (80 aa)) folds into the PAN domain. Residues asparagine 407 and asparagine 441 are each glycosylated (N-linked (GlcNAc...) asparagine). The helical transmembrane segment at 467–487 (LILGTSILVNFALISIFLFGT) threads the bilayer. The Cytoplasmic segment spans residues 488–813 (YCRITTKKNI…DPCSFISSLP (326 aa)). The region spanning 523–797 (AGFHEILGAG…KVTQMLDGAV (275 aa)) is the Protein kinase domain. ATP is bound by residues 529-537 (LGAGASGVV) and lysine 553. Residue aspartate 647 is the Proton acceptor of the active site.

Belongs to the protein kinase superfamily. Ser/Thr protein kinase family. In terms of assembly, interacts (via kinase domain) with ADF4. In terms of tissue distribution, expressed in plumules, radicles and panicles.

It is found in the membrane. It carries out the reaction L-seryl-[protein] + ATP = O-phospho-L-seryl-[protein] + ADP + H(+). The catalysed reaction is L-threonyl-[protein] + ATP = O-phospho-L-threonyl-[protein] + ADP + H(+). In terms of biological role, involved in innate immunity. Required for the expression of defense-related genes PR1A, LOX2 and CHS1 upon biotic stresses. Required for basal resistance to the fungal blast (M.grisea), bacterial blight (O.oryzae pv. oryzae, Xoo) and the herbivorous insect brown planthopper (N.lugens, BPH). May be involved in several defense signaling pathways. Involved in the promotion of seed germination. Required for the expression of alpha-amylase genes during seed germination. Involved in resistance against the brown planthopper (BPH). Member of the BPH3 (BPH resistance locus 3) cluster which contains LECRK1, LECRK2 and LECRK3. The protein is G-type lectin S-receptor-like serine/threonine-protein kinase LECRK1 of Oryza sativa subsp. indica (Rice).